The sequence spans 184 residues: GTP-binding protein Rheb (184 aa).

Lys8 participates in a covalent cross-link: Glycyl lysine isopeptide (Lys-Gly) (interchain with G-Cter in ubiquitin). The GDP site is built by Ser16, Val17, Gly18, Lys19, Ser20, Ser21, Val32, and Asp33. Residues Ser16, Val17, Gly18, Lys19, Ser20, Ser21, Val32, Asp33, Tyr35, Pro37, Thr38, Gly63, Asn119, Lys120, and Asp122 each contribute to the GTP site. Residue Ser20 participates in Mg(2+) binding. The Effector region motif lies at Tyr35–Phe43. Position 38 (Thr38) interacts with Mg(2+). Asn119 is a binding site for GDP. Residue Asp122 participates in GDP binding. Ser130 carries the post-translational modification Phosphoserine; by MAPKAPK5. Ala150 provides a ligand contact to GDP. A GTP-binding site is contributed by Ala150. Cysteine methyl ester is present on Cys181. A lipid anchor (S-farnesyl cysteine) is attached at Cys181. Positions Ser182–Met184 are cleaved as a propeptide — removed in mature form.

Belongs to the small GTPase superfamily. Rheb family. Associates with the mTORC1 complex (MTOR, MLST8 and RPTOR) in a guanyl nucleotide-independent manner. Interacts with TSC2. Interacts with MCRS1; the interaction maintains RHEB at the lysosome in its active GTP-bound form and prevents its interaction with the mTORC1 complex inhibitor TSC2, ensuring activation of the mTORC1 complex by RHEB. Interacts (when prenylated) with PDE6D; this promotes release from membranes. Post-translationally, farnesylation is important for efficiently activating mTORC1-mediated signaling. In terms of processing, polyubiquitinated in response to amino acid, promoting its interaction with MTOR and mTORC1 activation. Deubiquitination by ATXN3 promotes recruitment of the TSC-TBC complex and RHEB inactivation by TSC2. Monoubiquitinated at Lys-8 by RNF152, promoting its association with the TSC-TBC complex. Deubiquitinated at Lys-8 by USP4, promoting mTORC1 activation. Phosphorylation by MAPKAPK5 impairs GTP-binding and inactivation.

It localises to the endomembrane system. The protein localises to the lysosome membrane. It is found in the golgi apparatus membrane. Its subcellular location is the endoplasmic reticulum membrane. The protein resides in the cytoplasm. It localises to the cytosol. It carries out the reaction GTP + H2O = GDP + phosphate + H(+). Its activity is regulated as follows. Alternates between an inactive form bound to GDP and an active form bound to GTP. Inactivated by the TSC-TBC complex via the GTPase activating protein (GAP) domain of TSC2. Autoinhibited by Tyr-35, which constrains the active site conformation, restricting the access of the catalytic Asp-65 to the nucleotide-binding pocket. In terms of biological role, small GTPase that acts as an allosteric activator of the canonical mTORC1 complex, an evolutionarily conserved central nutrient sensor that stimulates anabolic reactions and macromolecule biosynthesis to promote cellular biomass generation and growth. In response to nutrients, growth factors or amino acids, specifically activates the protein kinase activity of MTOR, the catalytic component of the mTORC1 complex: acts by causing a conformational change that allows the alignment of residues in the active site of MTOR, thereby enhancing the phosphorylation of ribosomal protein S6 kinase (RPS6KB1 and RPS6KB2) and EIF4EBP1 (4E-BP1). RHEB is also required for localization of the TSC-TBC complex to lysosomal membranes. In response to starvation, RHEB is inactivated by the TSC-TBC complex, preventing activation of mTORC1. Has low intrinsic GTPase activity. This Mus musculus (Mouse) protein is GTP-binding protein Rheb.